A 504-amino-acid polypeptide reads, in one-letter code: Anaerobic nitric oxide reductase transcription regulator NorR (504 aa).

D57 bears the 4-aspartylphosphate mark. Residues 187 to 416 (MIGLSPGMTQ…LEHAIHRAVV (230 aa)) form the Sigma-54 factor interaction domain. Residues 215–222 (GETGTGKE) and 278–287 (ADNGTLFLDE) each bind ATP. Positions 479–498 (WAACARMLETDVANLHRLAK) form a DNA-binding region, H-T-H motif.

Its pathway is nitrogen metabolism; nitric oxide reduction. In terms of biological role, required for the expression of anaerobic nitric oxide (NO) reductase, acts as a transcriptional activator for at least the norVW operon. Activation also requires sigma-54. The polypeptide is Anaerobic nitric oxide reductase transcription regulator NorR (Escherichia coli O6:K15:H31 (strain 536 / UPEC)).